Here is a 116-residue protein sequence, read N- to C-terminus: MTRAAAEARGRRAERRAAWWLRLHGWRIVGQRLRVPVGEVDLVARRGRTVAFIEVKWRDRAADLDLAIDPYRLRRVAAAAEMLAPRFARPYDDIRIDVMLLAPRRLPRHLVHVWQP.

This sequence belongs to the UPF0102 family.

The sequence is that of UPF0102 protein Sala_0262 from Sphingopyxis alaskensis (strain DSM 13593 / LMG 18877 / RB2256) (Sphingomonas alaskensis).